Reading from the N-terminus, the 212-residue chain is Large ribosomal subunit protein uL3 (212 aa).

N5-methylglutamine is present on glutamine 152.

This sequence belongs to the universal ribosomal protein uL3 family. Part of the 50S ribosomal subunit. Forms a cluster with proteins L14 and L19. Methylated by PrmB.

In terms of biological role, one of the primary rRNA binding proteins, it binds directly near the 3'-end of the 23S rRNA, where it nucleates assembly of the 50S subunit. The sequence is that of Large ribosomal subunit protein uL3 from Marinomonas sp. (strain MWYL1).